The following is a 603-amino-acid chain: Elongation factor 4 (603 aa).

One can recognise a tr-type G domain in the interval 6–188 (AHIRNFCIIA…SVVQNVPPPS (183 aa)). GTP is bound by residues 18-23 (DHGKST) and 135-138 (NKID).

This sequence belongs to the TRAFAC class translation factor GTPase superfamily. Classic translation factor GTPase family. LepA subfamily.

The protein resides in the cell inner membrane. The enzyme catalyses GTP + H2O = GDP + phosphate + H(+). Its function is as follows. Required for accurate and efficient protein synthesis under certain stress conditions. May act as a fidelity factor of the translation reaction, by catalyzing a one-codon backward translocation of tRNAs on improperly translocated ribosomes. Back-translocation proceeds from a post-translocation (POST) complex to a pre-translocation (PRE) complex, thus giving elongation factor G a second chance to translocate the tRNAs correctly. Binds to ribosomes in a GTP-dependent manner. The protein is Elongation factor 4 of Myxococcus xanthus (strain DK1622).